Here is a 242-residue protein sequence, read N- to C-terminus: Ribonuclease PH (242 aa).

Phosphate-binding positions include R86 and 124–126; that span reads GTR.

The protein belongs to the RNase PH family. As to quaternary structure, homohexameric ring arranged as a trimer of dimers.

The enzyme catalyses tRNA(n+1) + phosphate = tRNA(n) + a ribonucleoside 5'-diphosphate. In terms of biological role, phosphorolytic 3'-5' exoribonuclease that plays an important role in tRNA 3'-end maturation. Removes nucleotide residues following the 3'-CCA terminus of tRNAs; can also add nucleotides to the ends of RNA molecules by using nucleoside diphosphates as substrates, but this may not be physiologically important. Probably plays a role in initiation of 16S rRNA degradation (leading to ribosome degradation) during starvation. The sequence is that of Ribonuclease PH from Bacillus pumilus (strain SAFR-032).